The chain runs to 466 residues: FERM domain-containing protein 8 (466 aa).

The residue at position 1 (Met1) is an N-acetylmethionine. Residues 1–21 (MEGAEGNAGQPGPAERSHRSS) form a disordered region. Position 24 is a phosphoserine (Ser24). The 348-residue stretch at 30–377 (ADVLVYLADD…YCIELSQAAE (348 aa)) folds into the FERM domain. The tract at residues 379–409 (TLSQESASGPHEAPSPSPPPTQRPKLRRQGS) is disordered. Phosphoserine is present on Ser384. The segment covering 391-400 (APSPSPPPTQ) has biased composition (pro residues). Ser409 is modified (phosphoserine). Thr420 bears the Phosphothreonine mark. Phosphoserine is present on residues Ser440 and Ser447. Polar residues predominate over residues 442–460 (FSRQLSSSQGSYTVVQPTD). The interval 442–466 (FSRQLSSSQGSYTVVQPTDDSLEQS) is disordered.

As to quaternary structure, interacts with iRhom proteins, including iRhom2/RHBDF2 (via cytoplasmic N-termini); this interaction leads to mutual protein stabilization. Interacts with LRP6; this interaction affects LRP6-binding to AXIN1. Widely expressed (at protein level).

It is found in the cytoplasm. The protein localises to the cytosol. The protein resides in the cell membrane. In terms of biological role, promotes the cell surface stability of iRhom1/RHBDF1 and iRhom2/RHBDF2 and prevents their degradation via the endolysosomal pathway. By acting on iRhoms, involved in ADAM17-mediated shedding of TNF, amphiregulin/AREG, HBEGF and TGFA from the cell surface. Negatively regulates Wnt signaling, possibly by antagonizing the recruitment of AXIN1 to LRP6. The polypeptide is FERM domain-containing protein 8 (Frmd8) (Mus musculus (Mouse)).